A 664-amino-acid polypeptide reads, in one-letter code: Lysophospholipase 1 (664 aa).

A signal peptide spans 1–22; that stretch reads MKLQSLLVSAAVLTSLTENVNA. 19 N-linked (GlcNAc...) asparagine glycosylation sites follow: N26, N33, N52, N78, N92, N123, N160, N170, N215, N277, N307, N345, N388, N459, N489, N513, N541, N565, and N582. Residues 35 to 586 form the PLA2c domain; that stretch reads TCDDDINLVR…TNYCWNGTID (552 aa). The GPI-anchor amidated asparagine moiety is linked to residue N634. Positions 635 to 664 are cleaved as a propeptide — removed in mature form; sequence AGNALVNYSNLNTNTFIGVLSVISAVFGLI.

It belongs to the lysophospholipase family.

The protein localises to the cell membrane. The catalysed reaction is a 1-acyl-sn-glycero-3-phosphocholine + H2O = sn-glycerol 3-phosphocholine + a fatty acid + H(+). It carries out the reaction a 1-acyl-sn-glycero-3-phospho-(1D-myo-inositol) + H2O = sn-glycero-3-phospho-1D-myo-inositol + a fatty acid + H(+). The enzyme catalyses a 1-acyl-sn-glycero-3-phospho-L-serine + H2O = sn-glycero-3-phospho-L-serine + a fatty acid + H(+). It catalyses the reaction a 1,2-diacyl-sn-glycero-3-phospho-(1D-myo-inositol) + 2 H2O = sn-glycero-3-phospho-1D-myo-inositol + 2 a carboxylate + 2 H(+). The catalysed reaction is a 1,2-diacyl-sn-glycero-3-phospho-L-serine + 2 H2O = sn-glycero-3-phospho-L-serine + 2 a carboxylate + 2 H(+). It carries out the reaction 2 1-hexadecanoyl-sn-glycero-3-phosphocholine = 1,2-dihexadecanoyl-sn-glycero-3-phosphocholine + sn-glycerol 3-phosphocholine. The enzyme catalyses 1-hexadecanoyl-sn-glycero-3-phosphocholine + H2O = sn-glycerol 3-phosphocholine + hexadecanoate + H(+). It catalyses the reaction 1,2-dihexadecanoyl-sn-glycero-3-phosphocholine + H2O = 1-hexadecanoyl-sn-glycero-3-phosphocholine + hexadecanoate + H(+). Its function is as follows. Sequentially removes both fatty acyl groups from diacylglycerophospholipids and therefore has both phospholipase B and lysophospholipase activities. It also displays transacylase activity. Substrate preference is phosphatidylserine &gt; phosphatidylinositol &gt;&gt; phosphatidylcholine &gt; phosphatidylethanolamine. The substrate specificity is pH- and ion-dependent. In contrast with activities observed at optimum pH 3.5, the order of substrate preference at pH 5.5 is phosphatidylcholine = phosphatidylethanolamine &gt;&gt; phosphatidylinositol. Degrades predominantly phosphatidylcholine and to some extent phosphatidylinositol in vivo. The chain is Lysophospholipase 1 from Saccharomyces cerevisiae (strain ATCC 204508 / S288c) (Baker's yeast).